The primary structure comprises 272 residues: ATP phosphoribosyltransferase regulatory subunit (272 aa).

This sequence belongs to the class-II aminoacyl-tRNA synthetase family. HisZ subfamily. As to quaternary structure, heteromultimer composed of HisG and HisZ subunits.

The protein localises to the cytoplasm. The protein operates within amino-acid biosynthesis; L-histidine biosynthesis; L-histidine from 5-phospho-alpha-D-ribose 1-diphosphate: step 1/9. Its function is as follows. Required for the first step of histidine biosynthesis. May allow the feedback regulation of ATP phosphoribosyltransferase activity by histidine. In Staphylococcus aureus (strain MRSA252), this protein is ATP phosphoribosyltransferase regulatory subunit.